Reading from the N-terminus, the 553-residue chain is Ribonuclease J 2 (553 aa).

Zn(2+) is bound by residues H69, H71, H138, and D160. Substrate is bound at residue R361–H365.

This sequence belongs to the metallo-beta-lactamase superfamily. RNA-metabolizing metallo-beta-lactamase-like family. Bacterial RNase J subfamily. Homodimer, may be a subunit of the RNA degradosome. The cofactor is Zn(2+).

Its subcellular location is the cytoplasm. In terms of biological role, an RNase that has 5'-3' exonuclease and possibly endonuclease activity. Involved in maturation of rRNA and in some organisms also mRNA maturation and/or decay. Has an overlapping but not completely redundant role with RNase J1 in the decay of mRNA. The sequence is that of Ribonuclease J 2 from Streptococcus pyogenes serotype M3 (strain ATCC BAA-595 / MGAS315).